The following is a 198-amino-acid chain: Protein GrpE (198 aa).

Positions 1–58 (MTEKDQSVNNEEFAEKEDNTAKDSNTDEQIEKTASEDDVQNDSSAVDDKEKEIQQLKE) are disordered. Basic and acidic residues-rich tracts occupy residues 16–35 (KEDN…KTAS) and 46–58 (VDDK…QLKE).

The protein belongs to the GrpE family. As to quaternary structure, homodimer.

Its subcellular location is the cytoplasm. In terms of biological role, participates actively in the response to hyperosmotic and heat shock by preventing the aggregation of stress-denatured proteins, in association with DnaK and GrpE. It is the nucleotide exchange factor for DnaK and may function as a thermosensor. Unfolded proteins bind initially to DnaJ; upon interaction with the DnaJ-bound protein, DnaK hydrolyzes its bound ATP, resulting in the formation of a stable complex. GrpE releases ADP from DnaK; ATP binding to DnaK triggers the release of the substrate protein, thus completing the reaction cycle. Several rounds of ATP-dependent interactions between DnaJ, DnaK and GrpE are required for fully efficient folding. The protein is Protein GrpE of Staphylococcus carnosus (strain TM300).